Here is a 236-residue protein sequence, read N- to C-terminus: Ribosome maturation protein SDO1 homolog (236 aa).

Belongs to the SDO1/SBDS family. In terms of assembly, crystallized in association with 70S ribosomes.

The sequence is that of Ribosome maturation protein SDO1 homolog from Thermococcus kodakarensis (strain ATCC BAA-918 / JCM 12380 / KOD1) (Pyrococcus kodakaraensis (strain KOD1)).